Consider the following 415-residue polypeptide: MKLSLTKVVNGCRLGKIKNLGKTGDHTMDIPGCLLYTKTGSAPHLTHHTLHNIHGVPAMAQLTLSSLAEHHEVLTEYKEGVGKFIGMPESLLYCSLHDPVSPCPAGYVTNKSVSVWSVAGRVEMTVSKFMAIQKALQPDWFQCLSDGEVSCKEATSIKRVRKSVDRSLLFLDNCLRLQEESEVLQKSVIIGVIEGGDVMEERLRSARETAKRPVGGFLLDGFQGNPTTLEARLRLLSSVTAELPEDKPRLISGVSRPDEVLECIERGVDLFESFFPYQVTERGCALTFSFDYQPNPEETLLQQNGTQEEIKCMDQIKKIETTGCNQEITSFEINLKEKKYQEDFNPLVRGCSCYCCKNHTRAYIHHLLVTNELLAGVLLMMHNFEHYFGFFHYIREALKSDKLAQLKELIHRQAS.

Residues Cys351, Cys353, Cys356, and His382 each coordinate Zn(2+).

The protein belongs to the queuine tRNA-ribosyltransferase family. QTRT2 subfamily. Heterodimer of a catalytic subunit QTRT1 and an accessory subunit QTRT2. The cofactor is Zn(2+).

The protein localises to the cytoplasm. It localises to the mitochondrion outer membrane. Non-catalytic subunit of the queuine tRNA-ribosyltransferase (TGT) that catalyzes the base-exchange of a guanine (G) residue with queuine (Q) at position 34 (anticodon wobble position) in tRNAs with GU(N) anticodons (tRNA-Asp, -Asn, -His and -Tyr), resulting in the hypermodified nucleoside queuosine (7-(((4,5-cis-dihydroxy-2-cyclopenten-1-yl)amino)methyl)-7-deazaguanosine). The sequence is that of Queuine tRNA-ribosyltransferase accessory subunit 2 from Homo sapiens (Human).